The primary structure comprises 236 residues: 4-hydroxy-tetrahydrodipicolinate reductase (236 aa).

NAD(+)-binding positions include 11-16 (GASGRM), 92-94 (GTT), and 116-119 (GSNF). Histidine 148 (proton donor/acceptor) is an active-site residue. Residue histidine 149 participates in (S)-2,3,4,5-tetrahydrodipicolinate binding. Lysine 152 serves as the catalytic Proton donor. Residue 158 to 159 (GS) participates in (S)-2,3,4,5-tetrahydrodipicolinate binding.

This sequence belongs to the DapB family.

It localises to the cytoplasm. The enzyme catalyses (S)-2,3,4,5-tetrahydrodipicolinate + NAD(+) + H2O = (2S,4S)-4-hydroxy-2,3,4,5-tetrahydrodipicolinate + NADH + H(+). It catalyses the reaction (S)-2,3,4,5-tetrahydrodipicolinate + NADP(+) + H2O = (2S,4S)-4-hydroxy-2,3,4,5-tetrahydrodipicolinate + NADPH + H(+). The protein operates within amino-acid biosynthesis; L-lysine biosynthesis via DAP pathway; (S)-tetrahydrodipicolinate from L-aspartate: step 4/4. Catalyzes the conversion of 4-hydroxy-tetrahydrodipicolinate (HTPA) to tetrahydrodipicolinate. This is 4-hydroxy-tetrahydrodipicolinate reductase from Xylella fastidiosa (strain M23).